A 418-amino-acid chain; its full sequence is Protein SSXT (418 aa).

S2 bears the N-acetylserine mark. The segment at 2 to 186 (SVAFAAPRQR…NQMTMSQGQP (185 aa)) is transcriptional activation. The SH2-binding signature appears at 50-53 (YQQM). Disordered regions lie at residues 77-118 (APPT…PAPH) and 188-418 (GNYG…NYQQ). Positions 225–251 (YQGQQPPMGMMGQVNQGNHMMGQRQIP) are enriched in low complexity. Positions 309–318 (GYDRPYEDSS) are enriched in basic and acidic residues. Composition is skewed to low complexity over residues 328–337 (QYGQQQDAYQ), 345–366 (YPPQQQQYPGQQGYPGQQQGYG), and 376–393 (YPNYPQGQGQQYGGYRPT). 2 consecutive repeat copies span residues 344-356 (GYPPQQQQYPGQQ) and 357-369 (GYPGQQQGYGPSQ). Positions 344–369 (GYPPQQQQYPGQQGYPGQQQGYGPSQ) are 2 X 13 AA imperfect tandem repeats. An SH2-binding motif is present at residues 374 to 377 (PQYP). Residues 392–401 (PTQPGPPQPP) carry the SH3-binding motif. The segment covering 394–403 (QPGPPQPPQQ) has biased composition (pro residues). A compositionally biased stretch (low complexity) spans 404-418 (RPYGYDQGQYGNYQQ). An SH2-binding motif is present at residues 413 to 416 (YGNY).

This sequence belongs to the SS18 family. Interacts with MLLT10. Isoform 1 interacts with RBM14 isoform 1. Isoform 2 interacts with RBM14 isoform 1. Component of the multiprotein chromatin-remodeling complexes SWI/SNF: SWI/SNF-A (BAF), SWI/SNF-B (PBAF) and related complexes. The canonical complex contains a catalytic subunit (either SMARCA4/BRG1/BAF190A or SMARCA2/BRM/BAF190B) and at least SMARCE1, ACTL6A/BAF53, SMARCC1/BAF155, SMARCC2/BAF170, and SMARCB1/SNF5/BAF47. Other subunits specific to each of the complexes may also be present permitting several possible combinations developmentally and tissue specific. Component of the SWI/SNF (GBAF) subcomplex, which includes at least BICRA or BICRAL (mutually exclusive), BRD9, SS18, the core BAF subunits, SMARCA2/BRM, SMARCA4/BRG1/BAF190A, ACTL6A/BAF53, SMARCC1/BAF155, and SMARCD1/BAF60A. In terms of tissue distribution, fairly ubiquitously expressed. Expressed in synovial sarcomas and in other human cell lines. The fusion genes SSXT-SSX1 and SSXT-SSX2 are expressed only in synovial sarcomas.

It localises to the nucleus. In terms of biological role, appears to function synergistically with RBM14 as a transcriptional coactivator. Isoform 1 and isoform 2 function in nuclear receptor coactivation. Isoform 1 and isoform 2 function in general transcriptional coactivation. Component of SWI/SNF chromatin remodeling subcomplex GBAF that carries out key enzymatic activities, changing chromatin structure by altering DNA-histone contacts within a nucleosome in an ATP-dependent manner. In Homo sapiens (Human), this protein is Protein SSXT (SS18).